Reading from the N-terminus, the 152-residue chain is Cytochrome c oxidase subunit 5A, mitochondrial (152 aa).

The transit peptide at 1-43 (MLGTALRRCAVAAAAASRAGPRGLLHPAPAPGPAAAIQSIRCY) directs the protein to the mitochondrion. The SIFI-degron signature appears at 2 to 22 (LGTALRRCAVAAAAASRAGPR). 2 positions are modified to N6-acetyllysine: Lys89 and Lys115. Phosphothreonine is present on Thr143.

This sequence belongs to the cytochrome c oxidase subunit 5A family. In terms of assembly, component of the cytochrome c oxidase (complex IV, CIV), a multisubunit enzyme composed of 14 subunits. The complex is composed of a catalytic core of 3 subunits MT-CO1, MT-CO2 and MT-CO3, encoded in the mitochondrial DNA, and 11 supernumerary subunits COX4I, COX5A, COX5B, COX6A, COX6B, COX6C, COX7A, COX7B, COX7C, COX8 and NDUFA4, which are encoded in the nuclear genome. The complex exists as a monomer or a dimer and forms supercomplexes (SCs) in the inner mitochondrial membrane with NADH-ubiquinone oxidoreductase (complex I, CI) and ubiquinol-cytochrome c oxidoreductase (cytochrome b-c1 complex, complex III, CIII), resulting in different assemblies (supercomplex SCI(1)III(2)IV(1) and megacomplex MCI(2)III(2)IV(2)). Interacts with AFG1L. Interacts with RAB5IF. Post-translationally, in response to mitochondrial stress, the precursor protein is ubiquitinated by the SIFI complex in the cytoplasm before mitochondrial import, leading to its degradation. Within the SIFI complex, UBR4 initiates ubiquitin chain that are further elongated or branched by KCMF1.

The protein resides in the mitochondrion inner membrane. Its pathway is energy metabolism; oxidative phosphorylation. Functionally, component of the cytochrome c oxidase, the last enzyme in the mitochondrial electron transport chain which drives oxidative phosphorylation. The respiratory chain contains 3 multisubunit complexes succinate dehydrogenase (complex II, CII), ubiquinol-cytochrome c oxidoreductase (cytochrome b-c1 complex, complex III, CIII) and cytochrome c oxidase (complex IV, CIV), that cooperate to transfer electrons derived from NADH and succinate to molecular oxygen, creating an electrochemical gradient over the inner membrane that drives transmembrane transport and the ATP synthase. Cytochrome c oxidase is the component of the respiratory chain that catalyzes the reduction of oxygen to water. Electrons originating from reduced cytochrome c in the intermembrane space (IMS) are transferred via the dinuclear copper A center (CU(A)) of subunit 2 and heme A of subunit 1 to the active site in subunit 1, a binuclear center (BNC) formed by heme A3 and copper B (CU(B)). The BNC reduces molecular oxygen to 2 water molecules using 4 electrons from cytochrome c in the IMS and 4 protons from the mitochondrial matrix. The chain is Cytochrome c oxidase subunit 5A, mitochondrial (COX5A) from Eulemur fulvus fulvus (Brown lemur).